An 83-amino-acid chain; its full sequence is Protein L83L (83 aa).

Polar residues predominate over residues 1 to 10; that stretch reads MDTSLKNNDG. Residues 1-25 are disordered; the sequence is MDTSLKNNDGASEADNKNYQDYKDE. Residues 14–25 are compositionally biased toward basic and acidic residues; the sequence is ADNKNYQDYKDE.

Belongs to the asfivirus L83L family. Interacts with host IL1B.

It is found in the host cytoplasm. In terms of biological role, may subvert the host innate immune response by interacting with host IL1B and interfering with its function. The chain is Protein L83L from Ornithodoros (relapsing fever ticks).